We begin with the raw amino-acid sequence, 127 residues long: Small ribosomal subunit protein uS11 (127 aa).

It belongs to the universal ribosomal protein uS11 family. Part of the 30S ribosomal subunit. Interacts with proteins S7 and S18. Binds to IF-3.

Its function is as follows. Located on the platform of the 30S subunit, it bridges several disparate RNA helices of the 16S rRNA. Forms part of the Shine-Dalgarno cleft in the 70S ribosome. This Nitrosococcus oceani (strain ATCC 19707 / BCRC 17464 / JCM 30415 / NCIMB 11848 / C-107) protein is Small ribosomal subunit protein uS11.